Here is a 145-residue protein sequence, read N- to C-terminus: Superoxide dismutase [Mn/Fe] (145 aa).

His10 and His64 together coordinate Fe(3+). Mn(2+)-binding residues include His10 and His64.

This sequence belongs to the iron/manganese superoxide dismutase family. It depends on Mn(2+) as a cofactor. Fe(3+) is required as a cofactor.

The catalysed reaction is 2 superoxide + 2 H(+) = H2O2 + O2. In terms of biological role, destroys superoxide anion radicals which are normally produced within the cells and which are toxic to biological systems. Catalyzes the dismutation of superoxide anion radicals into O2 and H2O2 by successive reduction and oxidation of the transition metal ion at the active site. The polypeptide is Superoxide dismutase [Mn/Fe] (sodA) (Streptococcus salivarius).